The sequence spans 251 residues: Small ribosomal subunit protein uS3 (251 aa).

One can recognise a KH type-2 domain in the interval 39–109 (IRNYVLARLK…EVKIDVVEVI (71 aa)). Positions 221–239 (EMKRMKDRRADSKSRPRDP) are enriched in basic and acidic residues. The tract at residues 221–251 (EMKRMKDRRADSKSRPRDPRSKRRRSRTKRA) is disordered. The span at 240-251 (RSKRRRSRTKRA) shows a compositional bias: basic residues.

Belongs to the universal ribosomal protein uS3 family. In terms of assembly, part of the 30S ribosomal subunit. Forms a tight complex with proteins S10 and S14.

Binds the lower part of the 30S subunit head. Binds mRNA in the 70S ribosome, positioning it for translation. The polypeptide is Small ribosomal subunit protein uS3 (Chlorobium limicola (strain DSM 245 / NBRC 103803 / 6330)).